The primary structure comprises 259 residues: Troponin T, fast skeletal muscle (259 aa).

Acidic residues predominate over residues 1-36; it reads MSDEETEQVEEQYEEEEEAQEEEVQEEAPEPEEVQE. The tract at residues 1-62 is disordered; it reads MSDEETEQVE…EKVDFDDIQK (62 aa). N-acetylserine is present on Ser2. Ser2 is modified (phosphoserine). Basic and acidic residues predominate over residues 50–62; that stretch reads PEGEKVDFDDIQK. Position 78 is a phosphoserine (Ser78). The span at 101–143 shows a compositional bias: basic and acidic residues; the sequence is RAERAEQQRIRAEKERERQNRLAEEKARREEEDAKRRAEDDLK. The interval 101 to 180 is disordered; the sequence is RAERAEQQRI…TAREMKKKIL (80 aa). 3 positions are modified to phosphoserine: Ser149, Ser156, and Ser157. The span at 171 to 180 shows a compositional bias: basic and acidic residues; the sequence is TAREMKKKIL. Ser193 carries the phosphoserine modification. Phosphotyrosine is present on Tyr209. Residues 235-259 form a disordered region; it reads RIDQAQKHSKKAGATAKGKVGGRWK.

This sequence belongs to the troponin T family.

Troponin T is the tropomyosin-binding subunit of troponin, the thin filament regulatory complex which confers calcium-sensitivity to striated muscle actomyosin ATPase activity. The chain is Troponin T, fast skeletal muscle (Tnnt3) from Rattus norvegicus (Rat).